A 137-amino-acid chain; its full sequence is Small ribosomal subunit protein uS12 (137 aa).

The segment at 1 to 55 is disordered; the sequence is MPTINQLVRKPRQSKSKKSDSPALNRNFNSKKKKFTDLNSPQKRGVCTRVGTMTP. At aspartate 102 the chain carries 3-methylthioaspartic acid. Residues 118–137 are disordered; sequence SGVDGRRQGRSLYGTKKPKK.

This sequence belongs to the universal ribosomal protein uS12 family. Part of the 30S ribosomal subunit. Contacts proteins S8 and S17. May interact with IF1 in the 30S initiation complex.

Functionally, with S4 and S5 plays an important role in translational accuracy. Interacts with and stabilizes bases of the 16S rRNA that are involved in tRNA selection in the A site and with the mRNA backbone. Located at the interface of the 30S and 50S subunits, it traverses the body of the 30S subunit contacting proteins on the other side and probably holding the rRNA structure together. The combined cluster of proteins S8, S12 and S17 appears to hold together the shoulder and platform of the 30S subunit. The protein is Small ribosomal subunit protein uS12 of Staphylococcus saprophyticus subsp. saprophyticus (strain ATCC 15305 / DSM 20229 / NCIMB 8711 / NCTC 7292 / S-41).